A 423-amino-acid polypeptide reads, in one-letter code: Probable sucrose-phosphatase 1 (423 aa).

Belongs to the sucrose phosphatase family. Homodimer. Mg(2+) is required as a cofactor.

It catalyses the reaction sucrose 6(F)-phosphate + H2O = sucrose + phosphate. The protein operates within glycan biosynthesis; sucrose biosynthesis; sucrose from D-fructose 6-phosphate and UDP-alpha-D-glucose: step 2/2. Functionally, catalyzes the final step of sucrose synthesis. This is Probable sucrose-phosphatase 1 (SPP1) from Arabidopsis thaliana (Mouse-ear cress).